The primary structure comprises 204 residues: ATP synthase subunit b 2 (204 aa).

Residues 50-70 form a helical membrane-spanning segment; the sequence is IFWLAVTFGLLLFLMSKVALP.

It belongs to the ATPase B chain family. In terms of assembly, F-type ATPases have 2 components, F(1) - the catalytic core - and F(0) - the membrane proton channel. F(1) has five subunits: alpha(3), beta(3), gamma(1), delta(1), epsilon(1). F(0) has three main subunits: a(1), b(2) and c(10-14). The alpha and beta chains form an alternating ring which encloses part of the gamma chain. F(1) is attached to F(0) by a central stalk formed by the gamma and epsilon chains, while a peripheral stalk is formed by the delta and b chains.

The protein localises to the cell inner membrane. Its function is as follows. F(1)F(0) ATP synthase produces ATP from ADP in the presence of a proton or sodium gradient. F-type ATPases consist of two structural domains, F(1) containing the extramembraneous catalytic core and F(0) containing the membrane proton channel, linked together by a central stalk and a peripheral stalk. During catalysis, ATP synthesis in the catalytic domain of F(1) is coupled via a rotary mechanism of the central stalk subunits to proton translocation. In terms of biological role, component of the F(0) channel, it forms part of the peripheral stalk, linking F(1) to F(0). The b'-subunit is a diverged and duplicated form of b found in plants and photosynthetic bacteria. The protein is ATP synthase subunit b 2 (atpF2) of Rhodospirillum centenum (strain ATCC 51521 / SW).